Consider the following 250-residue polypeptide: 5'-nucleotidase SurE (250 aa).

4 residues coordinate a divalent metal cation: aspartate 8, aspartate 9, serine 40, and asparagine 95.

Belongs to the SurE nucleotidase family. The cofactor is a divalent metal cation.

Its subcellular location is the cytoplasm. The enzyme catalyses a ribonucleoside 5'-phosphate + H2O = a ribonucleoside + phosphate. Its function is as follows. Nucleotidase that shows phosphatase activity on nucleoside 5'-monophosphates. This Nitratidesulfovibrio vulgaris (strain ATCC 29579 / DSM 644 / CCUG 34227 / NCIMB 8303 / VKM B-1760 / Hildenborough) (Desulfovibrio vulgaris) protein is 5'-nucleotidase SurE.